Consider the following 382-residue polypeptide: Protein-arginine rhamnosyltransferase (382 aa).

A dTDP-binding site is contributed by 18–19 (FG). The active-site Proton acceptor is D20. DTDP-beta-L-rhamnose is bound by residues D20, Y187, 250 to 252 (VPQ), and 268 to 272 (RGEDS). DTDP is bound by residues Y187, 250 to 252 (VPQ), and 268 to 272 (RGEDS). The active site involves E270.

It belongs to the glycosyltransferase 104 family.

It carries out the reaction dTDP-beta-L-rhamnose + L-arginyl-[protein] = N(omega)-(alpha-L-rhamnosyl)-L-arginyl-[protein] + dTDP + H(+). In terms of biological role, protein-arginine rhamnosyltransferase that catalyzes the transfer of a single rhamnose to elongation factor P (EF-P) on 'Lys-32', a modification required for EF-P-dependent rescue of polyproline stalled ribosomes. This Neisseria meningitidis serogroup B / serotype 15 (strain H44/76) protein is Protein-arginine rhamnosyltransferase.